Here is a 192-residue protein sequence, read N- to C-terminus: Orotate phosphoribosyltransferase (192 aa).

116 to 124 contributes to the 5-phospho-alpha-D-ribose 1-diphosphate binding site; it reads EDIVTTGLS. Thr-120 and Arg-148 together coordinate orotate.

Belongs to the purine/pyrimidine phosphoribosyltransferase family. PyrE subfamily. Homodimer. Mg(2+) serves as cofactor.

It carries out the reaction orotidine 5'-phosphate + diphosphate = orotate + 5-phospho-alpha-D-ribose 1-diphosphate. It functions in the pathway pyrimidine metabolism; UMP biosynthesis via de novo pathway; UMP from orotate: step 1/2. Catalyzes the transfer of a ribosyl phosphate group from 5-phosphoribose 1-diphosphate to orotate, leading to the formation of orotidine monophosphate (OMP). This is Orotate phosphoribosyltransferase from Bartonella tribocorum (strain CIP 105476 / IBS 506).